We begin with the raw amino-acid sequence, 347 residues long: Biotin synthase (347 aa).

One can recognise a Radical SAM core domain in the interval 40-258 (AQVQVSTLLS…IAVARIAMPR (219 aa)). C55, C59, and C62 together coordinate [4Fe-4S] cluster. [2Fe-2S] cluster contacts are provided by C99, C130, C190, and R262.

It belongs to the radical SAM superfamily. Biotin synthase family. Homodimer. It depends on [4Fe-4S] cluster as a cofactor. The cofactor is [2Fe-2S] cluster.

It carries out the reaction (4R,5S)-dethiobiotin + (sulfur carrier)-SH + 2 reduced [2Fe-2S]-[ferredoxin] + 2 S-adenosyl-L-methionine = (sulfur carrier)-H + biotin + 2 5'-deoxyadenosine + 2 L-methionine + 2 oxidized [2Fe-2S]-[ferredoxin]. Its pathway is cofactor biosynthesis; biotin biosynthesis; biotin from 7,8-diaminononanoate: step 2/2. Functionally, catalyzes the conversion of dethiobiotin (DTB) to biotin by the insertion of a sulfur atom into dethiobiotin via a radical-based mechanism. The sequence is that of Biotin synthase from Stenotrophomonas maltophilia (strain K279a).